The primary structure comprises 94 residues: Pyrimidine/purine nucleoside phosphorylase (94 aa).

It belongs to the nucleoside phosphorylase PpnP family.

It catalyses the reaction a purine D-ribonucleoside + phosphate = a purine nucleobase + alpha-D-ribose 1-phosphate. It carries out the reaction adenosine + phosphate = alpha-D-ribose 1-phosphate + adenine. The catalysed reaction is cytidine + phosphate = cytosine + alpha-D-ribose 1-phosphate. The enzyme catalyses guanosine + phosphate = alpha-D-ribose 1-phosphate + guanine. It catalyses the reaction inosine + phosphate = alpha-D-ribose 1-phosphate + hypoxanthine. It carries out the reaction thymidine + phosphate = 2-deoxy-alpha-D-ribose 1-phosphate + thymine. The catalysed reaction is uridine + phosphate = alpha-D-ribose 1-phosphate + uracil. The enzyme catalyses xanthosine + phosphate = alpha-D-ribose 1-phosphate + xanthine. Catalyzes the phosphorolysis of diverse nucleosides, yielding D-ribose 1-phosphate and the respective free bases. Can use uridine, adenosine, guanosine, cytidine, thymidine, inosine and xanthosine as substrates. Also catalyzes the reverse reactions. This Aeromonas salmonicida (strain A449) protein is Pyrimidine/purine nucleoside phosphorylase.